The sequence spans 343 residues: GTPase Obg (343 aa).

The 159-residue stretch at 1-159 (MKFLDEAKVY…HWLWLRLKLI (159 aa)) folds into the Obg domain. In terms of domain architecture, OBG-type G spans 160–327 (ADAGLVGLPN…ALRALLAAMD (168 aa)). Residues 166 to 173 (GLPNAGKS), 191 to 195 (FTTLH), 212 to 215 (DIPG), 279 to 282 (SKAD), and 308 to 310 (SAA) contribute to the GTP site. Mg(2+) contacts are provided by Ser173 and Thr193.

It belongs to the TRAFAC class OBG-HflX-like GTPase superfamily. OBG GTPase family. In terms of assembly, monomer. Requires Mg(2+) as cofactor.

It is found in the cytoplasm. Functionally, an essential GTPase which binds GTP, GDP and possibly (p)ppGpp with moderate affinity, with high nucleotide exchange rates and a fairly low GTP hydrolysis rate. Plays a role in control of the cell cycle, stress response, ribosome biogenesis and in those bacteria that undergo differentiation, in morphogenesis control. The protein is GTPase Obg of Methylobacterium sp. (strain 4-46).